The following is a 328-amino-acid chain: MRRHKEVNFVAYLLFSLLVLVSAALAQNCGSQGGGKACASGQCCSKFGWCGNTNDYCGSGNCQSQCPGGGPGPGPGGDLGSAISNSMFDQMLKHRNENSCQGKNFYSYNAFINAARSFPGFGTSGDINARKREIAAFFAQTSHETTGGWASAPDGPYAWGYCFLRERGNPGDYCPPSSQWPCAPGRKYFGRGPIQISHNYNYGPCGRAIGVDLLNNPDLVATDPVISFKTALWFWMTPQSPKPSCHDVIIGRWNPSSADRAANRLPGFGVITNIINGGLECGRGTDNRVQDRIGFYRRYCSILGVTPGDNLDCVNQRWFGNALLVDTL.

The first 26 residues, 1–26 (MRRHKEVNFVAYLLFSLLVLVSAALA), serve as a signal peptide directing secretion. The Chitin-binding type-1 domain maps to 27 to 68 (QNCGSQGGGKACASGQCCSKFGWCGNTNDYCGSGNCQSQCPG). 7 disulfide bridges follow: Cys29-Cys44, Cys38-Cys50, Cys43-Cys57, Cys62-Cys66, Cys100-Cys162, Cys174-Cys182, and Cys281-Cys313. The active-site Proton donor is the Glu144. A propeptide spans 322 to 328 (ALLVDTL) (removed in mature form).

Belongs to the glycosyl hydrolase 19 family. Chitinase class I subfamily.

It localises to the vacuole. The enzyme catalyses Random endo-hydrolysis of N-acetyl-beta-D-glucosaminide (1-&gt;4)-beta-linkages in chitin and chitodextrins.. Functionally, defense against chitin-containing fungal pathogens. The chain is Endochitinase from Solanum tuberosum (Potato).